Consider the following 196-residue polypeptide: Phosphoheptose isomerase (196 aa).

The 161-residue stretch at 36–196 (MAQALQAEGK…LIDQHLFGGA (161 aa)) folds into the SIS domain. 51–53 (NGG) is a binding site for substrate. Positions 60 and 64 each coordinate Zn(2+). Substrate contacts are provided by residues Glu64, 93 to 94 (ND), 119 to 121 (STS), Ser124, and Gln174. Residues Gln174 and His182 each coordinate Zn(2+).

It belongs to the SIS family. GmhA subfamily. As to quaternary structure, homotetramer. Zn(2+) serves as cofactor.

Its subcellular location is the cytoplasm. The enzyme catalyses 2 D-sedoheptulose 7-phosphate = D-glycero-alpha-D-manno-heptose 7-phosphate + D-glycero-beta-D-manno-heptose 7-phosphate. The protein operates within carbohydrate biosynthesis; D-glycero-D-manno-heptose 7-phosphate biosynthesis; D-glycero-alpha-D-manno-heptose 7-phosphate and D-glycero-beta-D-manno-heptose 7-phosphate from sedoheptulose 7-phosphate: step 1/1. In terms of biological role, catalyzes the isomerization of sedoheptulose 7-phosphate in D-glycero-D-manno-heptose 7-phosphate. This Alkalilimnicola ehrlichii (strain ATCC BAA-1101 / DSM 17681 / MLHE-1) protein is Phosphoheptose isomerase.